Consider the following 384-residue polypeptide: Dual-specificity RNA methyltransferase RlmN (384 aa).

The active-site Proton acceptor is the E105. The region spanning 111–350 (EDDRATLCVS…TIVRKTRGDD (240 aa)) is the Radical SAM core domain. A disulfide bridge links C118 with C355. [4Fe-4S] cluster-binding residues include C125, C129, and C132. S-adenosyl-L-methionine-binding positions include 179-180 (GE), S211, 233-235 (SLH), and N312. Residue C355 is the S-methylcysteine intermediate of the active site.

Belongs to the radical SAM superfamily. RlmN family. [4Fe-4S] cluster serves as cofactor.

The protein localises to the cytoplasm. The catalysed reaction is adenosine(2503) in 23S rRNA + 2 reduced [2Fe-2S]-[ferredoxin] + 2 S-adenosyl-L-methionine = 2-methyladenosine(2503) in 23S rRNA + 5'-deoxyadenosine + L-methionine + 2 oxidized [2Fe-2S]-[ferredoxin] + S-adenosyl-L-homocysteine. It carries out the reaction adenosine(37) in tRNA + 2 reduced [2Fe-2S]-[ferredoxin] + 2 S-adenosyl-L-methionine = 2-methyladenosine(37) in tRNA + 5'-deoxyadenosine + L-methionine + 2 oxidized [2Fe-2S]-[ferredoxin] + S-adenosyl-L-homocysteine. Functionally, specifically methylates position 2 of adenine 2503 in 23S rRNA and position 2 of adenine 37 in tRNAs. m2A2503 modification seems to play a crucial role in the proofreading step occurring at the peptidyl transferase center and thus would serve to optimize ribosomal fidelity. The protein is Dual-specificity RNA methyltransferase RlmN of Escherichia fergusonii (strain ATCC 35469 / DSM 13698 / CCUG 18766 / IAM 14443 / JCM 21226 / LMG 7866 / NBRC 102419 / NCTC 12128 / CDC 0568-73).